Consider the following 224-residue polypeptide: MKVLILACLVALALARELEELNVPGEIVESLSSSEESITHINKKIEKFQSEEQQQMEDELQDKIHPFAQTQSLVYPFPGPIPKSLPQNIPPLTQTPVVVPPFLQPEIMGVSKVKEAMAPKHKEMPFPKYPVEPFTESQSLTLTDVENLHLPLPLLQSWMHQPPQPLPPTVMFPPQSVLSLSQSKVLPVPQKAVPYPQRDMPIQAFLLYQEPVLGPVRGPFPIIV.

The first 15 residues, 1–15 (MKVLILACLVALALA), serve as a signal peptide directing secretion. 4 positions are modified to phosphoserine: serine 30, serine 32, serine 33, and serine 34.

This sequence belongs to the beta-casein family. As to expression, mammary gland specific. Secreted in milk.

It is found in the secreted. Its function is as follows. Important role in determination of the surface properties of the casein micelles. This Bubalus bubalis (Domestic water buffalo) protein is Beta-casein (CSN2).